The sequence spans 82 residues: Three-finger toxin MicTx3 (82 aa).

The N-terminal stretch at 1-21 (MKTLLLTLVVVTIMCLDLGYT) is a signal peptide. Disulfide bonds link C24–C44, C38–C59, C63–C74, and C75–C80.

Belongs to the three-finger toxin family. Short-chain subfamily. In terms of tissue distribution, expressed by the venom gland.

It localises to the secreted. In terms of biological role, has been described to inhibit nicotinic acetylcholine receptor (nAChR) alpha-7/CHRNA7 subunits and to bind acetylcholine binding protein (AChBP) (Kd=29.5 nM). The polypeptide is Three-finger toxin MicTx3 (Micrurus corallinus (Brazilian coral snake)).